An 85-amino-acid chain; its full sequence is ATP synthase subunit c (85 aa).

Transmembrane regions (helical) follow at residues 10 to 30 (IAVALLIGLGALGTAIGFGLL) and 53 to 73 (FIVAGLLDAVTMIGVGIALFF).

Belongs to the ATPase C chain family. In terms of assembly, F-type ATPases have 2 components, F(1) - the catalytic core - and F(0) - the membrane proton channel. F(1) has five subunits: alpha(3), beta(3), gamma(1), delta(1), epsilon(1). F(0) has three main subunits: a(1), b(2) and c(10-14). The alpha and beta chains form an alternating ring which encloses part of the gamma chain. F(1) is attached to F(0) by a central stalk formed by the gamma and epsilon chains, while a peripheral stalk is formed by the delta and b chains.

The protein resides in the cell inner membrane. Its function is as follows. F(1)F(0) ATP synthase produces ATP from ADP in the presence of a proton or sodium gradient. F-type ATPases consist of two structural domains, F(1) containing the extramembraneous catalytic core and F(0) containing the membrane proton channel, linked together by a central stalk and a peripheral stalk. During catalysis, ATP synthesis in the catalytic domain of F(1) is coupled via a rotary mechanism of the central stalk subunits to proton translocation. Key component of the F(0) channel; it plays a direct role in translocation across the membrane. A homomeric c-ring of between 10-14 subunits forms the central stalk rotor element with the F(1) delta and epsilon subunits. This Pseudomonas aeruginosa (strain LESB58) protein is ATP synthase subunit c.